The sequence spans 540 residues: Probable G-protein coupled receptor 75 (540 aa).

Topologically, residues 1–46 (MNTSAPLQNVPNATLLNMPPLHGGNSTSLQEGLRDFIHTATLVTCT) are extracellular. Asn-2 and Asn-25 each carry an N-linked (GlcNAc...) asparagine glycan. The helical transmembrane segment at 47–67 (FLLAIIFCLGSYGNFIVFLSF) threads the bilayer. At 68 to 86 (FDPSFRKFRTNFDFMILNL) the chain is on the cytoplasmic side. The helical transmembrane segment at 87 to 107 (SFCDLFICGVTAPMFTFVLFF) threads the bilayer. Residues 108–120 (SSASSIPDSFCFT) lie on the Extracellular side of the membrane. Residues 121 to 141 (FHLTSSGFVIMSLKMVAVIAL) form a helical membrane-spanning segment. Residues 142–160 (HRLRMVMGKQPNCTASFSC) are Cytoplasmic-facing. A helical membrane pass occupies residues 161–181 (ILLLTLLLWATSFTLATLATL). At 182–205 (RTNKSHLCLPMSSLMDGEGKAILS) the chain is on the extracellular side. N-linked (GlcNAc...) asparagine glycosylation occurs at Asn-184. A helical transmembrane segment spans residues 206-226 (LYVVDFTFCVAVVSVSYIMIA). Residues 227-318 (QTLRKNAQVK…INFSTAKDSK (92 aa)) are Cytoplasmic-facing. The chain crosses the membrane as a helical span at residues 319 to 339 (AVVTCVVIVLSVLVCCLPLGI). Residues 340 to 350 (SLVQMVLSDNG) lie on the Extracellular side of the membrane. Residues 351–371 (SFILYQFELFGFTLIFFKSGL) traverse the membrane as a helical segment. Residues 372–540 (NPFIYSRNSA…SAKQIPIPSV (169 aa)) lie on the Cytoplasmic side of the membrane. The segment at 443 to 475 (DQACGPSHSKESAASPKVSAGHQPCGQSSSTPI) is disordered.

The protein belongs to the G-protein coupled receptor 1 family. Highly expressed in brain and heart. Also detected in skeletal muscle, liver and kidney. Also expressed by islet cells (at protein level).

It localises to the cell membrane. Its function is as follows. G protein-coupled receptor that is activated by the chemokine CCL5/RANTES. Probably coupled to heterotrimeric Gq proteins, it stimulates inositol trisphosphate production and calcium mobilization upon activation. Together with CCL5/RANTES, may play a role in neuron survival through activation of a downstream signaling pathway involving the PI3, Akt and MAP kinases. CCL5/RANTES may also regulate insulin secretion by pancreatic islet cells through activation of this receptor. The chain is Probable G-protein coupled receptor 75 (Gpr75) from Mus musculus (Mouse).